Here is a 359-residue protein sequence, read N- to C-terminus: Chorismate synthase (359 aa).

2 residues coordinate NADP(+): arginine 48 and arginine 54. FMN-binding positions include 125–127, 243–244, glycine 283, 298–302, and arginine 324; these read RSS, NA, and KPTSS.

This sequence belongs to the chorismate synthase family. In terms of assembly, homotetramer. The cofactor is FMNH2.

The enzyme catalyses 5-O-(1-carboxyvinyl)-3-phosphoshikimate = chorismate + phosphate. It participates in metabolic intermediate biosynthesis; chorismate biosynthesis; chorismate from D-erythrose 4-phosphate and phosphoenolpyruvate: step 7/7. Functionally, catalyzes the anti-1,4-elimination of the C-3 phosphate and the C-6 proR hydrogen from 5-enolpyruvylshikimate-3-phosphate (EPSP) to yield chorismate, which is the branch point compound that serves as the starting substrate for the three terminal pathways of aromatic amino acid biosynthesis. This reaction introduces a second double bond into the aromatic ring system. This Mannheimia succiniciproducens (strain KCTC 0769BP / MBEL55E) protein is Chorismate synthase.